The sequence spans 278 residues: Large ribosomal subunit protein uL2 (278 aa).

Disordered regions lie at residues methionine 1–aspartate 20, threonine 25–glycine 57, and valine 224–arginine 278. Composition is skewed to basic residues over residues alanine 45 to glycine 57 and valine 269 to arginine 278.

It belongs to the universal ribosomal protein uL2 family. In terms of assembly, part of the 50S ribosomal subunit. Forms a bridge to the 30S subunit in the 70S ribosome.

In terms of biological role, one of the primary rRNA binding proteins. Required for association of the 30S and 50S subunits to form the 70S ribosome, for tRNA binding and peptide bond formation. It has been suggested to have peptidyltransferase activity; this is somewhat controversial. Makes several contacts with the 16S rRNA in the 70S ribosome. In Nocardia farcinica (strain IFM 10152), this protein is Large ribosomal subunit protein uL2.